The sequence spans 384 residues: Neuropeptide Y receptor type 2 (384 aa).

Over 1–54 the chain is Extracellular; the sequence is MKMGPLGAEADENQTVEEMKVDQFGPGHTTLPGELAPDSEPELIDSTKLIEVQV. The N-linked (GlcNAc...) asparagine glycan is linked to N13. A helical transmembrane segment spans residues 55–75; it reads VLILAYCSIILLGVIGNSLVI. Over 76 to 89 the chain is Cytoplasmic; it reads HVVIKFKSMRTVTN. Residues 90 to 110 traverse the membrane as a helical segment; sequence FFIANLAVADLLVNTLCLPFT. Over 111–127 the chain is Extracellular; the sequence is LTYTLMGEWKMGPVLCH. An intrachain disulfide couples C126 to C206. Residues 128 to 148 traverse the membrane as a helical segment; it reads LVPYAQGLAVQVSTITLTVIA. Topologically, residues 149–168 are cytoplasmic; it reads LDRHRCIVYHLESKISKQIS. The chain crosses the membrane as a helical span at residues 169–189; sequence FLIIGLAWGVSALLASPLAIF. Topologically, residues 190-219 are extracellular; sequence REYSLIEIIPDFEIVACTEKWPGEEKGIYG. The helical transmembrane segment at 220-240 threads the bilayer; it reads TIYSLSSLLILYVLPLGIISF. Residues 241 to 271 are Cytoplasmic-facing; that stretch reads SYTRIWSKLKNHVSPGAAHDHYHQRRQKTTK. Residues 272 to 292 form a helical membrane-spanning segment; it reads MLVCVVVVFAVSWLPLHAFQL. At 293–307 the chain is on the extracellular side; that stretch reads AVDIDSHVLDLKEYK. A helical transmembrane segment spans residues 308 to 328; the sequence is LIFTVFHIIAMCSTFANPLLY. At 329-384 the chain is on the cytoplasmic side; it reads GWMNSNYRKAFLSAFRCEQRLDAIHSEVSVTFKAKKHLQVTKNNGPNDSFTETTNV. C345 is lipidated: S-palmitoyl cysteine.

The protein belongs to the G-protein coupled receptor 1 family.

It localises to the cell membrane. In terms of biological role, receptor for neuropeptide Y and peptide YY. This chain is Neuropeptide Y receptor type 2 (NPY2R), found in Bos taurus (Bovine).